Consider the following 133-residue polypeptide: MESVRQQKVARLILKEMADIFLKESRVLFGNVFISITVVRMSPDLSVAKLYLSIMLQEDKNAILKEIKVHTKELRKLLGERIRKQVRIIPEIIFYLDDNVDYANHMDDVLSKITIPKKEDENFDPNQYPGLKE.

It belongs to the RbfA family. In terms of assembly, monomer. Binds 30S ribosomal subunits, but not 50S ribosomal subunits or 70S ribosomes.

It is found in the cytoplasm. Functionally, one of several proteins that assist in the late maturation steps of the functional core of the 30S ribosomal subunit. Associates with free 30S ribosomal subunits (but not with 30S subunits that are part of 70S ribosomes or polysomes). Required for efficient processing of 16S rRNA. May interact with the 5'-terminal helix region of 16S rRNA. The chain is Ribosome-binding factor A from Cytophaga hutchinsonii (strain ATCC 33406 / DSM 1761 / CIP 103989 / NBRC 15051 / NCIMB 9469 / D465).